A 372-amino-acid chain; its full sequence is 18-hydroxynorfluorocurarine reductase (372 aa).

9 residues coordinate Zn(2+): cysteine 47, aspartate 50, histidine 69, glutamate 70, cysteine 100, cysteine 103, cysteine 106, cysteine 114, and cysteine 172. NADP(+)-binding positions include 197–202, lysine 226, 283–285, serine 307, and arginine 354; these read GLGGIG and LGA.

Belongs to the zinc-containing alcohol dehydrogenase family. Homodimer. The cofactor is Zn(2+).

The catalysed reaction is (19E)-cur-19-en-17-al + NADP(+) = norfluorocurarine + NADPH + H(+). It carries out the reaction 17,18-epoxy-17-hydroxycur-19-ene + NADP(+) = 18-hydroxynorfluorocurarine + NADPH + H(+). It functions in the pathway alkaloid biosynthesis. Its function is as follows. Alcohol dehydrogenase involved in the biosynthesis of curare monoterpene indole alkaloids (MIAs), natural products such as diaboline, a pharmacologically active compound used to regulate blood pressure. Curare alkaloids act as animal glycine receptor antagonists. Catalyzes the conversion of norfluorocurarine to desoxy Wieland-Gumlich aldehyde, and of 18-OH norfluorocurarine to Wieland-Gumlich aldehyde. This is 18-hydroxynorfluorocurarine reductase from Strychnos sp.